We begin with the raw amino-acid sequence, 258 residues long: MVLIRVLANLLILQLSYAQKSSELVVGGRPCNINEHRSLVVLFNSSGFLCGGTLINQDWVVTAAHCDSNNFQMIFGVHSKNVPNEDEQRRVPKEKFFCDSNKNYTQWNKDIMLIRLNSPVNNSTHIAPLSLPSSPPIVGSVCRIMGWGTITFPNETYPDVPHCANINLFNYTVCHGAHAGLPATSRTLCAGVLEGGKDTCKGDSGGPLICNGQFQGIVSWGGHPCAQPREPGVYTKVFDHLDWIQNIIAGNTTATCPL.

A signal peptide spans 1–18 (MVLIRVLANLLILQLSYA). Positions 19-24 (QKSSEL) are excised as a propeptide. Positions 25–249 (VVGGRPCNIN…HLDWIQNIIA (225 aa)) constitute a Peptidase S1 domain. Disulfide bonds link Cys-31–Cys-163, Cys-50–Cys-66, Cys-98–Cys-256, Cys-142–Cys-210, Cys-174–Cys-189, and Cys-200–Cys-225. Asn-44 is a glycosylation site (N-linked (GlcNAc...) asparagine). The active-site Charge relay system is the His-65. A glycan (N-linked (GlcNAc...) asparagine) is linked at Asn-103. Asp-110 (charge relay system) is an active-site residue. N-linked (GlcNAc...) asparagine glycans are attached at residues Asn-121, Asn-122, Asn-154, and Asn-170. Catalysis depends on Ser-204, which acts as the Charge relay system. Asn-251 carries an N-linked (GlcNAc...) asparagine glycan.

Belongs to the peptidase S1 family. Snake venom subfamily. In terms of assembly, monomer. In terms of tissue distribution, expressed by the venom gland.

The protein localises to the secreted. Functionally, snake venom serine protease that may act in the hemostasis system of the prey. This Trimeresurus stejnegeri (Chinese green tree viper) protein is Snake venom serine protease 5.